Reading from the N-terminus, the 591-residue chain is NADP-dependent malic enzyme (591 aa).

Tyrosine 139 acts as the Proton donor in catalysis. NAD(+) is bound at residue arginine 192. The Proton acceptor role is filled by lysine 210. A divalent metal cation is bound by residues glutamate 282, aspartate 283, and aspartate 306. Position 306 (aspartate 306) interacts with NAD(+). 335 to 351 (LFLGAGEAGTGIAELIA) lines the NADP(+) pocket. Asparagine 447 is an NAD(+) binding site.

Belongs to the malic enzymes family. In terms of assembly, homotetramer. Mg(2+) is required as a cofactor. Mn(2+) serves as cofactor.

Its subcellular location is the cytoplasm. The enzyme catalyses (S)-malate + NADP(+) = pyruvate + CO2 + NADPH. It catalyses the reaction oxaloacetate + H(+) = pyruvate + CO2. This Vitis vinifera (Grape) protein is NADP-dependent malic enzyme.